The chain runs to 95 residues: Large ribosomal subunit protein uL23 (95 aa).

It belongs to the universal ribosomal protein uL23 family. As to quaternary structure, contacts protein L29, and trigger factor when it is bound to the ribosome. Part of the 50S ribosomal subunit.

In terms of biological role, one of the early assembly proteins it binds 23S rRNA. One of the proteins that surrounds the polypeptide exit tunnel on the outside of the ribosome. Forms the main docking site for trigger factor binding to the ribosome. The sequence is that of Large ribosomal subunit protein uL23 from Geobacillus stearothermophilus (Bacillus stearothermophilus).